The following is a 206-amino-acid chain: Stage III sporulation protein AF (206 aa).

A run of 2 helical transmembrane segments spans residues 1–21 (MSFL…AIVI) and 34–54 (AKMV…FKLF).

It localises to the cell membrane. The polypeptide is Stage III sporulation protein AF (spoIIIAF) (Bacillus subtilis (strain 168)).